The sequence spans 91 residues: uncharacterized protein (91 aa).

This sequence belongs to the FrmR/RcnR family.

The protein resides in the cytoplasm. This is an uncharacterized protein from Serratia marcescens.